We begin with the raw amino-acid sequence, 511 residues long: Immunoglobulin-binding protein EibD (511 aa).

A signal peptide spans 1 to 26 (MSKKFTMTLLSSSLAGLLVMSGGVSA). Residues 27-417 (QNGTYSVLQD…SKAIAANTRT (391 aa)) are surface exposed passenger domain. Residues 27–460 (QNGTYSVLQD…GLFQPYSVGK (434 aa)) are Extracellular-facing. The interval 161–287 (DAKASGEFSV…TGTESDKTYG (127 aa)) is head domain. A neck region spans residues 288 to 303 (TRVLGGLSDGTRNSDA). The right-handed coiled-coil (RHcc) stretch occupies residues 304–349 (ATVGQLNRKVGGVYDDVKARITVESEKQKKYTDQKTSEVNEKVEAR). Residues 304 to 349 (ATVGQLNRKVGGVYDDVKARITVESEKQKKYTDQKTSEVNEKVEAR) adopt a coiled-coil conformation. Residues 329 to 344 (EKQKKYTDQKTSEVNE) form a required to bind IgA region. The segment at 350 to 375 (TTVGVDSDGKLTRAEGATKTIAVNDG) is saddle domain. Positions 376–441 (LVALSGRTDR…INENHKEMKR (66 aa)) form a coiled coil. A left-handed coiled-coil (LHcc) region spans residues 376–441 (LVALSGRTDR…INENHKEMKR (66 aa)). The required to bind IgG stretch occupies residues 384 to 418 (DRIDYAVGAIDGRVTRNTQSIEKNSKAIAANTRTL). Residues 418–460 (LQQHSARLDSQQRQINENHKEMKRAAAQSAALTGLFQPYSVGK) form an outer membrane translocation of the passenger domain region. Transmembrane regions (beta stranded) follow at residues 461-471 (FNATAAVGGYS), 474-485 (QALAVGVGYRFN), 488-497 (TAAKAGVAFS), and 501-511 (ASWNVGVNFEF). The tract at residues 461 to 511 (FNATAAVGGYSDQQALAVGVGYRFNEQTAAKAGVAFSDGDASWNVGVNFEF) is translocator domain.

Belongs to the autotransporter-2 (AT-2) (TC 1.B.40) family. Eib subfamily. In terms of assembly, homotrimer; can probably form mixed heterotrimers in vivo. Will form mixed heterotrimers with EibA or EibC; these are correctly located in the outer membrane and bind IgG Fc, although less well than homotrimers. In denaturing gels runs as a band of about 210 kDa. Binds the Fc portion of immunoglobulins; binds more than 1 Fc per subunit, can be modeled to bind 3 Fc per trimer.

The protein resides in the cell surface. The protein localises to the cell outer membrane. Binds (in a non-immune fashion) to the Fc portion of human IgA and IgG; binding occurs on the cell surface. Confers the ability to survive exposure to human serum exposure. Binds to the Fc portion of human IgG, IgA and to whole mouse antibodies also via Fc. Upon overexpression cells acquire an extra cell surface layer that forms a zipper-like contact between cells; cells autoagglutinate and form biofilm more readily, suggesting it may play a role in defense against a host. The protein is Immunoglobulin-binding protein EibD of Escherichia coli.